The chain runs to 458 residues: MKSNFSKFKDFIKYKKVAVVGIGVSNRPLIKFLVKLGAKVTAFDKKHREKLGSISLELEEIGVDLVLGENYLDKLDGYDVIFKTPSMRIDRPEFVKAKESGAYITSEMEEFIKYCPAKVFGITGSDGKTTTTTLVYEMLKKEGYRTWVGGNIGTPLFANIEEMKEDHMVVLELSSFQLMTMDVSPEISLITNLSPNHLDVHKDFEEYVWAKKNIFKYQSSNNLLVLNKDDDLTNGMENEALGDVLKFSLVEKVYNGACLSNNKLTIQGKEVCDSKDIKLKGRHNIANLLAAFCMVNKYVSIDSMKYVATNFSGVEHRCEFIREVNGIKYYNDSIASSPSRTLAGLNSFEKPVILIAGGYDKKIPFEPLAEGGYDKIKILILMGDTKNKIKSAFEKVISYKKCEMEIVIVNSMEEAVKVADNMAEKGDIITLSPACASFDMYPNFEIRGNEFKNIVNSL.

Residue 124 to 130 (GSDGKTT) participates in ATP binding.

It belongs to the MurCDEF family.

It is found in the cytoplasm. It catalyses the reaction UDP-N-acetyl-alpha-D-muramoyl-L-alanine + D-glutamate + ATP = UDP-N-acetyl-alpha-D-muramoyl-L-alanyl-D-glutamate + ADP + phosphate + H(+). The protein operates within cell wall biogenesis; peptidoglycan biosynthesis. In terms of biological role, cell wall formation. Catalyzes the addition of glutamate to the nucleotide precursor UDP-N-acetylmuramoyl-L-alanine (UMA). The polypeptide is UDP-N-acetylmuramoylalanine--D-glutamate ligase (Clostridium botulinum (strain ATCC 19397 / Type A)).